The chain runs to 305 residues: Acetaldehyde dehydrogenase (305 aa).

The active-site Acyl-thioester intermediate is cysteine 130. NAD(+) contacts are provided by residues 161 to 169 and asparagine 272; that span reads SVGPGTRKN.

This sequence belongs to the acetaldehyde dehydrogenase family.

It carries out the reaction acetaldehyde + NAD(+) + CoA = acetyl-CoA + NADH + H(+). This Leptothrix cholodnii (strain ATCC 51168 / LMG 8142 / SP-6) (Leptothrix discophora (strain SP-6)) protein is Acetaldehyde dehydrogenase.